Consider the following 115-residue polypeptide: NADH-ubiquinone oxidoreductase chain 3 (115 aa).

3 helical membrane passes run 3–23 (LMITLLTNFTLATLLVTIAFW), 55–75 (FFLVAITFLLFDLEIALLLPL), and 84–104 (LNTMLTMALLLIFLLAVSLAY).

The protein belongs to the complex I subunit 3 family. As to quaternary structure, core subunit of respiratory chain NADH dehydrogenase (Complex I) which is composed of 45 different subunits. Interacts with TMEM186. Interacts with TMEM242.

It localises to the mitochondrion inner membrane. It carries out the reaction a ubiquinone + NADH + 5 H(+)(in) = a ubiquinol + NAD(+) + 4 H(+)(out). Core subunit of the mitochondrial membrane respiratory chain NADH dehydrogenase (Complex I) which catalyzes electron transfer from NADH through the respiratory chain, using ubiquinone as an electron acceptor. Essential for the catalytic activity of complex I. In Ovis aries (Sheep), this protein is NADH-ubiquinone oxidoreductase chain 3.